A 633-amino-acid polypeptide reads, in one-letter code: Threonine--tRNA ligase (633 aa).

Residues 1–61 form the TGS domain; the sequence is MPAIRLPDGS…DHDVDLAIVT (61 aa). The catalytic stretch occupies residues 242 to 533; the sequence is DHRKLGRQLD…LIEHHAGAMP (292 aa). Residues Cys333, His384, and His510 each contribute to the Zn(2+) site.

This sequence belongs to the class-II aminoacyl-tRNA synthetase family. In terms of assembly, homodimer. Requires Zn(2+) as cofactor.

It is found in the cytoplasm. It catalyses the reaction tRNA(Thr) + L-threonine + ATP = L-threonyl-tRNA(Thr) + AMP + diphosphate + H(+). Catalyzes the attachment of threonine to tRNA(Thr) in a two-step reaction: L-threonine is first activated by ATP to form Thr-AMP and then transferred to the acceptor end of tRNA(Thr). Also edits incorrectly charged L-seryl-tRNA(Thr). This Laribacter hongkongensis (strain HLHK9) protein is Threonine--tRNA ligase.